The following is a 393-amino-acid chain: Nucleosome assembly protein 1-like 1 (393 aa).

Residues 1-10 (MANIDNKEQT) are compositionally biased toward basic and acidic residues. 2 disordered regions span residues 1 to 36 (MANI…NSKA) and 132 to 165 (ECEW…KEDP). 2 stretches are compositionally biased toward acidic residues: residues 11-30 (ELDQ…EAGE) and 132-144 (ECEW…EDIS). The NAP1L motif motif lies at 126–151 (YEPTEEECEWKVDEEEDISGDLKDKA). A compositionally biased stretch (basic and acidic residues) spans 145–165 (GDLKDKAKLEEEKKDEEKEDP). The Nuclear localization signal motif lies at 274 to 280 (IKKKQKH). Positions 347-378 (AIEDDDDDYDEEGEEADDEEGEEEADEDNDPD) are enriched in acidic residues. The segment at 347 to 393 (AIEDDDDDYDEEGEEADDEEGEEEADEDNDPDYEPKKDQNPAECKQQ) is disordered. The span at 379–393 (YEPKKDQNPAECKQQ) shows a compositional bias: basic and acidic residues.

It belongs to the nucleosome assembly protein (NAP) family. As to quaternary structure, forms homomultimers. Interacts with histone B4. Interacts with the B-type cyclins ccnb1 and ccnb2. In terms of processing, phosphorylated by cyclin B-cdc2 kinase complexes.

The protein localises to the cytoplasm. The protein resides in the nucleus. In terms of biological role, acts as a chaperone for the linker histone to facilitate deposition of histone B4 onto linker DNA. Required for both remodeling of sperm chromatin into nucleosomes, and linker histone binding to nucleosome core dimers. Plays a role in tissue-specific gene regulation. Required for primitive hemopoiesis, acting upstream of tal1/scl. The sequence is that of Nucleosome assembly protein 1-like 1 from Xenopus tropicalis (Western clawed frog).